We begin with the raw amino-acid sequence, 745 residues long: Probable copper-transporting ATPase PacS (745 aa).

Residues 1 to 94 are Cytoplasmic-facing; it reads MAQTINLQLE…PVFSAKLVTG (94 aa). The HMA domain maps to 3-68; that stretch reads QTINLQLEGM…AVERAGYHAR (66 aa). A metal cation-binding residues include cysteine 14 and cysteine 17. A helical membrane pass occupies residues 95-115; sequence LVISAVLFFGSLPMMLGVNIP. At 116 to 125 the chain is on the extracellular side; sequence HFPHIFHDPW. The chain crosses the membrane as a helical span at residues 126-145; the sequence is LQWLLATPVQFWSGAEFYRG. The Cytoplasmic segment spans residues 146 to 152; the sequence is AWKSVRT. Residues 153 to 173 form a helical membrane-spanning segment; that stretch reads RSATMDTLVALGTSAAYFYSV. Over 174–193 the chain is Extracellular; it reads AITLFPQWLTSQGLAAHVYF. A helical transmembrane segment spans residues 194 to 214; that stretch reads EAAAVVITLILLGRSLEQRAR. Topologically, residues 215-342 are cytoplasmic; it reads RETSAAIRKL…KAPIQHFVDR (128 aa). The helical transmembrane segment at 343–365 threads the bilayer; the sequence is ITHWFVPTVIVVAIAAFCIWWLT. Topologically, residues 366-372 are extracellular; the sequence is TGNITLA. The chain crosses the membrane as a helical span at residues 373–390; the sequence is VLTLVEVLIIACPCALGL. Topologically, residues 391–543 are cytoplasmic; sequence ATPTSVMVGT…QAQQWEKEQK (153 aa). Residue aspartate 428 is the 4-aspartylphosphate intermediate of the active site. The chain crosses the membrane as a helical span at residues 544–564; it reads TVIWLAVDTEVKALLAIADAI. Over 565–687 the chain is Extracellular; that stretch reads KPSSPQVVQA…KLSRATMGNI (123 aa). Mg(2+) contacts are provided by aspartate 633 and aspartate 637. A helical membrane pass occupies residues 688–707; it reads RQNLFFAFIYNVIGIPVAAG. Residues 708–719 lie on the Cytoplasmic side of the membrane; sequence LFYPLFGLLLNP. Residues 720–738 traverse the membrane as a helical segment; it reads ILAGAAMAFSSVSVVTNAL. Residues 739-745 are Extracellular-facing; the sequence is RLKKFCP.

It belongs to the cation transport ATPase (P-type) (TC 3.A.3) family. Type IB subfamily.

The protein localises to the cell membrane. It carries out the reaction Cu(+)(in) + ATP + H2O = Cu(+)(out) + ADP + phosphate + H(+). In terms of biological role, may play a role in the osmotic adaptation. The polypeptide is Probable copper-transporting ATPase PacS (pacS) (Synechocystis sp. (strain ATCC 27184 / PCC 6803 / Kazusa)).